The sequence spans 505 residues: 2,3-bisphosphoglycerate-independent phosphoglycerate mutase (505 aa).

Mn(2+) is bound by residues Asp13 and Ser63. The active-site Phosphoserine intermediate is Ser63. Residues His124, 153–154, Arg183, Arg189, 254–257, and Lys330 contribute to the substrate site; these read RD and RADR. The Mn(2+) site is built by Asp396, His400, Asp437, His438, and His456.

It belongs to the BPG-independent phosphoglycerate mutase family. As to quaternary structure, monomer. Requires Mn(2+) as cofactor.

It carries out the reaction (2R)-2-phosphoglycerate = (2R)-3-phosphoglycerate. The protein operates within carbohydrate degradation; glycolysis; pyruvate from D-glyceraldehyde 3-phosphate: step 3/5. Its function is as follows. Catalyzes the interconversion of 2-phosphoglycerate and 3-phosphoglycerate. The polypeptide is 2,3-bisphosphoglycerate-independent phosphoglycerate mutase (Ruegeria pomeroyi (strain ATCC 700808 / DSM 15171 / DSS-3) (Silicibacter pomeroyi)).